A 189-amino-acid chain; its full sequence is Elongation factor P (189 aa).

The protein belongs to the elongation factor P family.

It is found in the cytoplasm. It functions in the pathway protein biosynthesis; polypeptide chain elongation. In terms of biological role, involved in peptide bond synthesis. Stimulates efficient translation and peptide-bond synthesis on native or reconstituted 70S ribosomes in vitro. Probably functions indirectly by altering the affinity of the ribosome for aminoacyl-tRNA, thus increasing their reactivity as acceptors for peptidyl transferase. This Campylobacter lari (strain RM2100 / D67 / ATCC BAA-1060) protein is Elongation factor P.